Reading from the N-terminus, the 422-residue chain is Histidine--tRNA ligase (422 aa).

This sequence belongs to the class-II aminoacyl-tRNA synthetase family. In terms of assembly, homodimer.

It is found in the cytoplasm. The enzyme catalyses tRNA(His) + L-histidine + ATP = L-histidyl-tRNA(His) + AMP + diphosphate + H(+). The protein is Histidine--tRNA ligase of Syntrophomonas wolfei subsp. wolfei (strain DSM 2245B / Goettingen).